We begin with the raw amino-acid sequence, 144 residues long: Large ribosomal subunit protein uL13 (144 aa).

Belongs to the universal ribosomal protein uL13 family. Part of the 50S ribosomal subunit.

Functionally, this protein is one of the early assembly proteins of the 50S ribosomal subunit, although it is not seen to bind rRNA by itself. It is important during the early stages of 50S assembly. This is Large ribosomal subunit protein uL13 from Nitrosomonas europaea (strain ATCC 19718 / CIP 103999 / KCTC 2705 / NBRC 14298).